We begin with the raw amino-acid sequence, 201 residues long: Glutathione S-transferase GstA (201 aa).

A GST N-terminal domain is found at 1 to 81; it reads MKLFYKPGAC…YLADSVPDRQ (81 aa). Residues cysteine 10, lysine 35, valine 52, 65–66, asparagine 99, and 103–106 each bind glutathione; these read EG and TELH. Residues 87 to 201 enclose the GST C-terminal domain; that stretch reads NSISRYKTIE…QDALSAEGLK (115 aa).

It belongs to the GST superfamily. Beta family. Homodimer.

It localises to the cytoplasm. It catalyses the reaction RX + glutathione = an S-substituted glutathione + a halide anion + H(+). Conjugation of reduced glutathione to a wide number of exogenous and endogenous hydrophobic electrophiles. This chain is Glutathione S-transferase GstA (gstA), found in Escherichia coli O157:H7.